The sequence spans 171 residues: L-methionine sulfoximine/L-methionine sulfone acetyltransferase (171 aa).

One can recognise an N-acetyltransferase domain in the interval 1–163; sequence MTIRFADKAD…DLTFMQLQLD (163 aa). Substrate contacts are provided by residues 72–74 and 82–84; these read RSF and EHS. Acetyl-CoA contacts are provided by residues 85–87, 93–98, N124, and S133; these read VYV and GKGLGR.

In terms of assembly, homodimer.

The catalysed reaction is L-methionine sulfoximine + acetyl-CoA = N-acetyl-L-methionine sulfoximine + CoA + H(+). The enzyme catalyses L-methionine sulfone + acetyl-CoA = N-acetyl-L-methionine sulfone + CoA + H(+). Functionally, plays a role in the resistance against the toxic effects of L-methionine sulfoximine (MSX), a rare amino acid which inhibits glutamine synthetase (GlnA). Catalyzes the acetylation of MSX. It can also use L-methionine sulfone (MSO). Also catalyzes the acylation of free L-amino acids using an acyl-CoA as acyl donor. The protein is L-methionine sulfoximine/L-methionine sulfone acetyltransferase (yncA) of Salmonella typhimurium (strain LT2 / SGSC1412 / ATCC 700720).